Reading from the N-terminus, the 38-residue chain is Large ribosomal subunit protein bL36A (38 aa).

Belongs to the bacterial ribosomal protein bL36 family.

In Pseudomonas aeruginosa (strain UCBPP-PA14), this protein is Large ribosomal subunit protein bL36A.